Consider the following 393-residue polypeptide: Acetylornithine aminotransferase (393 aa).

Pyridoxal 5'-phosphate is bound by residues glycine 100 to threonine 101 and phenylalanine 132. Arginine 135 provides a ligand contact to N(2)-acetyl-L-ornithine. Residue aspartate 217–glutamine 220 coordinates pyridoxal 5'-phosphate. Residue lysine 246 is modified to N6-(pyridoxal phosphate)lysine. Residue serine 275 participates in N(2)-acetyl-L-ornithine binding. Threonine 276 provides a ligand contact to pyridoxal 5'-phosphate.

It belongs to the class-III pyridoxal-phosphate-dependent aminotransferase family. ArgD subfamily. In terms of assembly, homodimer. Pyridoxal 5'-phosphate is required as a cofactor.

It localises to the cytoplasm. It catalyses the reaction N(2)-acetyl-L-ornithine + 2-oxoglutarate = N-acetyl-L-glutamate 5-semialdehyde + L-glutamate. It functions in the pathway amino-acid biosynthesis; L-arginine biosynthesis; N(2)-acetyl-L-ornithine from L-glutamate: step 4/4. This Campylobacter jejuni subsp. jejuni serotype O:2 (strain ATCC 700819 / NCTC 11168) protein is Acetylornithine aminotransferase.